Here is a 132-residue protein sequence, read N- to C-terminus: Protein FasE (132 aa).

In Escherichia coli, this protein is Protein FasE (fasE).